Reading from the N-terminus, the 335-residue chain is Trans-3-hydroxy-L-proline dehydratase (335 aa).

The active-site Proton acceptor is Cys-91. Substrate is bound by residues 92–93 (GH), His-222, and 256–257 (GS).

The protein belongs to the proline racemase family. Homodimer.

The enzyme catalyses trans-3-hydroxy-L-proline = 1-pyrroline-2-carboxylate + H2O. Functionally, catalyzes the dehydration of trans-3-hydroxy-L-proline (t3LHyp) to Delta(1)-pyrroline-2-carboxylate (Pyr2C). Does not possess neither proline racemase nor 4-hydroxyproline 2-epimerase activities. The polypeptide is Trans-3-hydroxy-L-proline dehydratase (Burkholderia cenocepacia (strain HI2424)).